The sequence spans 344 residues: Dihydroorotate dehydrogenase (quinone) (344 aa).

FMN-binding positions include 65–69 (AGFDK) and Thr-89. Position 69 (Lys-69) interacts with substrate. 114 to 118 (NRMGF) contacts substrate. Positions 145 and 178 each coordinate FMN. A substrate-binding site is contributed by Asn-178. The active-site Nucleophile is Ser-181. Asn-183 is a substrate binding site. FMN contacts are provided by Lys-215 and Thr-243. 244–245 (NT) provides a ligand contact to substrate. Residues Gly-269, Gly-298, and 319-320 (YT) contribute to the FMN site.

The protein belongs to the dihydroorotate dehydrogenase family. Type 2 subfamily. Monomer. The cofactor is FMN.

The protein localises to the cell membrane. The catalysed reaction is (S)-dihydroorotate + a quinone = orotate + a quinol. It functions in the pathway pyrimidine metabolism; UMP biosynthesis via de novo pathway; orotate from (S)-dihydroorotate (quinone route): step 1/1. Catalyzes the conversion of dihydroorotate to orotate with quinone as electron acceptor. This Clavibacter michiganensis subsp. michiganensis (strain NCPPB 382) protein is Dihydroorotate dehydrogenase (quinone).